Consider the following 456-residue polypeptide: Probable transcription factor At3g04930 (456 aa).

The tract at residues 1–71 (MTSDHRDALF…LNSPSTSSLP (71 aa)) is disordered. 2 stretches are compositionally biased toward acidic residues: residues 15-38 (ESPD…DLRD) and 50-62 (AEAE…EEDL). Residue Ser16 is modified to Phosphoserine.

Belongs to the GeBP family.

The sequence is that of Probable transcription factor At3g04930 from Arabidopsis thaliana (Mouse-ear cress).